We begin with the raw amino-acid sequence, 240 residues long: Sugar fermentation stimulation protein homolog (240 aa).

This sequence belongs to the SfsA family.

This Natranaerobius thermophilus (strain ATCC BAA-1301 / DSM 18059 / JW/NM-WN-LF) protein is Sugar fermentation stimulation protein homolog.